The sequence spans 72 residues: Penaeidin-2b (72 aa).

Positions 1–21 are cleaved as a signal peptide; it reads MRLVVCLVFLASFALVCQGEA. Intrachain disulfides connect cysteine 45/cysteine 59, cysteine 48/cysteine 66, and cysteine 60/cysteine 67. Lysine 71 carries the lysine amide modification.

The protein belongs to the penaeidin family.

It is found in the cytoplasmic granule. Its function is as follows. Antibacterial and antifungal activity. Presents chitin-binding activity. This is Penaeidin-2b from Penaeus vannamei (Whiteleg shrimp).